The following is a 471-amino-acid chain: A-type ATP synthase subunit B (471 aa).

It belongs to the ATPase alpha/beta chains family. As to quaternary structure, has multiple subunits with at least A(3), B(3), C, D, E, F, H, I and proteolipid K(x).

The protein resides in the cell membrane. Component of the A-type ATP synthase that produces ATP from ADP in the presence of a proton gradient across the membrane. The B chain is a regulatory subunit. The sequence is that of A-type ATP synthase subunit B from Halobacterium salinarum (strain ATCC 29341 / DSM 671 / R1).